The primary structure comprises 160 residues: Ribosome maturation factor RimP (160 aa).

This sequence belongs to the RimP family.

The protein resides in the cytoplasm. In terms of biological role, required for maturation of 30S ribosomal subunits. This chain is Ribosome maturation factor RimP, found in Geobacter sp. (strain M21).